A 75-amino-acid polypeptide reads, in one-letter code: UPF0346 protein LSL_0716 (75 aa).

This sequence belongs to the UPF0346 family.

The chain is UPF0346 protein LSL_0716 from Ligilactobacillus salivarius (strain UCC118) (Lactobacillus salivarius).